The sequence spans 293 residues: tRNA pseudouridine synthase B (293 aa).

Asp-38 serves as the catalytic Nucleophile.

It belongs to the pseudouridine synthase TruB family. Type 1 subfamily.

The catalysed reaction is uridine(55) in tRNA = pseudouridine(55) in tRNA. Its function is as follows. Responsible for synthesis of pseudouridine from uracil-55 in the psi GC loop of transfer RNAs. This chain is tRNA pseudouridine synthase B, found in Nostoc sp. (strain PCC 7120 / SAG 25.82 / UTEX 2576).